The chain runs to 124 residues: Large ribosomal subunit protein eL31 (124 aa).

The protein belongs to the eukaryotic ribosomal protein eL31 family. Component of the large ribosomal subunit.

It is found in the cytoplasm. Functionally, component of the large ribosomal subunit. The ribosome is a large ribonucleoprotein complex responsible for the synthesis of proteins in the cell. This is Large ribosomal subunit protein eL31 (rpl31) from Paralichthys olivaceus (Bastard halibut).